Here is a 60-residue protein sequence, read N- to C-terminus: Probable tautomerase SP_1017 (60 aa).

Pro-2 functions as the Proton acceptor; via imino nitrogen in the catalytic mechanism.

This sequence belongs to the 4-oxalocrotonate tautomerase family.

The protein is Probable tautomerase SP_1017 of Streptococcus pneumoniae serotype 4 (strain ATCC BAA-334 / TIGR4).